The sequence spans 152 residues: Ribosomal RNA large subunit methyltransferase H (152 aa).

S-adenosyl-L-methionine-binding positions include leucine 65, glycine 96, and 115–120 (LGPMTW).

It belongs to the RNA methyltransferase RlmH family. As to quaternary structure, homodimer.

It localises to the cytoplasm. The catalysed reaction is pseudouridine(1915) in 23S rRNA + S-adenosyl-L-methionine = N(3)-methylpseudouridine(1915) in 23S rRNA + S-adenosyl-L-homocysteine + H(+). Specifically methylates the pseudouridine at position 1915 (m3Psi1915) in 23S rRNA. In Gluconacetobacter diazotrophicus (strain ATCC 49037 / DSM 5601 / CCUG 37298 / CIP 103539 / LMG 7603 / PAl5), this protein is Ribosomal RNA large subunit methyltransferase H.